A 491-amino-acid polypeptide reads, in one-letter code: La-related protein 6 (491 aa).

Positions Met1–Pro87 are disordered. Ala2 carries the N-acetylalanine modification. Residues Glu24–Gly37 show a composition bias toward acidic residues. A phosphoserine mark is found at Ser56 and Ser58. The HTH La-type RNA-binding domain maps to Lys86–Pro177. The RRM domain maps to Lys184–Pro296. Residues Leu186–Leu193 carry the Nuclear export signal motif. Disordered regions lie at residues Met293–Arg403 and Ser423–Val491. The Nuclear localization signal motif lies at Pro296–Lys302. Residues Asp332 to Pro346 are compositionally biased toward low complexity. Polar residues-rich tracts occupy residues Asn359–Leu386 and Gln444–Leu453. An SUZ-C domain is found at Pro427–Glu485. A compositionally biased stretch (basic and acidic residues) spans His482–Val491.

In terms of assembly, interacts (via the HTH domain) with VIM/vimentin. Interacts (via C-terminus) with non-muscle myosin MYH10. Interacts (via C-terminus) with DHX9. Expressed in numerous tissues.

It is found in the cytoplasm. The protein resides in the nucleus. In terms of biological role, regulates the coordinated translation of type I collagen alpha-1 and alpha-2 mRNAs, CO1A1 and CO1A2. Stabilizes mRNAs through high-affinity binding of a stem-loop structure in their 5' UTR. This regulation requires VIM and MYH10 filaments, and the helicase DHX9. This chain is La-related protein 6 (LARP6), found in Homo sapiens (Human).